The chain runs to 66 residues: Small ribosomal subunit protein bS21 (66 aa).

It belongs to the bacterial ribosomal protein bS21 family.

The polypeptide is Small ribosomal subunit protein bS21 (Rickettsia akari (strain Hartford)).